The primary structure comprises 328 residues: Tryptophan--tRNA ligase (328 aa).

ATP is bound by residues 10–12 and 18–19; these read QAT and GN. The 'HIGH' region signature appears at 11–19; the sequence is ATGSLHLGN. Residue Asp134 coordinates L-tryptophan. ATP contacts are provided by residues 146–148, Ile186, and 195–199; these read GED and KMSKS. Residues 195-199 carry the 'KMSKS' region motif; that stretch reads KMSKS.

Belongs to the class-I aminoacyl-tRNA synthetase family. In terms of assembly, homodimer.

The protein localises to the cytoplasm. It catalyses the reaction tRNA(Trp) + L-tryptophan + ATP = L-tryptophyl-tRNA(Trp) + AMP + diphosphate + H(+). Its function is as follows. Catalyzes the attachment of tryptophan to tRNA(Trp). This is Tryptophan--tRNA ligase from Rickettsia bellii (strain RML369-C).